The chain runs to 231 residues: Protoporphyrinogen IX dehydrogenase [quinone] (231 aa).

Residues 8–178 (CLMLYSTTDG…AVRRFASDFA (171 aa)) form the Flavodoxin-like domain. Residues 14 to 18 (TTDGH) and 90 to 158 (FFSV…ETDS) contribute to the FMN site. The helical transmembrane segment at 208–228 (CLLAIVGMSAAVIVGIRIIAA) threads the bilayer.

The protein belongs to the HemG family. The cofactor is FMN.

The protein resides in the membrane. The catalysed reaction is protoporphyrinogen IX + 3 a menaquinone = protoporphyrin IX + 3 a menaquinol. The enzyme catalyses protoporphyrinogen IX + 3 a ubiquinone = protoporphyrin IX + 3 a ubiquinol. It carries out the reaction protoporphyrinogen IX + 3 a quinone = protoporphyrin IX + 3 a quinol. It functions in the pathway porphyrin-containing compound metabolism; protoporphyrin-IX biosynthesis; protoporphyrin-IX from protoporphyrinogen-IX: step 1/1. Functionally, in E.coli extracts under anerobic conditions catalyzes the 6-electron oxidation of protoporphyrinogen IX to form protoporphyrin IX, transferring electrons to fumarate reductase, presumably via menaquinone. In vitro under aerobic conditions forms protoporphyrin IX using ubiquinone as an electron acceptor. Complements an E.coli hemG deletion, allowing normal growth in vivo. This chain is Protoporphyrinogen IX dehydrogenase [quinone], found in Leishmania major.